The chain runs to 272 residues: Large ribosomal subunit protein uL3 (272 aa).

The interval 125-146 is disordered; the sequence is QHIGPKSHGGGGGSQPLRQTGS.

This sequence belongs to the universal ribosomal protein uL3 family. As to quaternary structure, part of the 50S ribosomal subunit. Forms a cluster with proteins L14 and L19.

One of the primary rRNA binding proteins, it binds directly near the 3'-end of the 23S rRNA, where it nucleates assembly of the 50S subunit. The polypeptide is Large ribosomal subunit protein uL3 (Metamycoplasma arthritidis (strain 158L3-1) (Mycoplasma arthritidis)).